Here is a 621-residue protein sequence, read N- to C-terminus: 1-deoxy-D-xylulose-5-phosphate synthase (621 aa).

Residues histidine 76 and 117-119 contribute to the thiamine diphosphate site; that span reads AHS. Aspartate 148 contacts Mg(2+). Residues 149–150, asparagine 178, tyrosine 285, and glutamate 367 contribute to the thiamine diphosphate site; that span reads GA. Mg(2+) is bound at residue asparagine 178.

This sequence belongs to the transketolase family. DXPS subfamily. In terms of assembly, homodimer. It depends on Mg(2+) as a cofactor. Thiamine diphosphate serves as cofactor.

It catalyses the reaction D-glyceraldehyde 3-phosphate + pyruvate + H(+) = 1-deoxy-D-xylulose 5-phosphate + CO2. Its pathway is metabolic intermediate biosynthesis; 1-deoxy-D-xylulose 5-phosphate biosynthesis; 1-deoxy-D-xylulose 5-phosphate from D-glyceraldehyde 3-phosphate and pyruvate: step 1/1. Its function is as follows. Catalyzes the acyloin condensation reaction between C atoms 2 and 3 of pyruvate and glyceraldehyde 3-phosphate to yield 1-deoxy-D-xylulose-5-phosphate (DXP). This chain is 1-deoxy-D-xylulose-5-phosphate synthase, found in Aromatoleum aromaticum (strain DSM 19018 / LMG 30748 / EbN1) (Azoarcus sp. (strain EbN1)).